The following is a 1209-amino-acid chain: Nitric oxide synthase (1209 aa).

Serine 103 lines the (6R)-L-erythro-5,6,7,8-tetrahydrobiopterin pocket. Cysteine 181 is a binding site for heme b. 5 residues coordinate L-arginine: glutamine 244, tryptophan 353, tyrosine 354, glutamate 358, and asparagine 363. Tryptophan 444 and phenylalanine 457 together coordinate (6R)-L-erythro-5,6,7,8-tetrahydrobiopterin. Heme b is bound at residue tyrosine 472. Positions 491–511 (VHRKFHFKQIARAVKFTSKLF) are calmodulin-binding. The 203-residue stretch at 521-723 (ATILYATETG…QFRAWSSKIF (203 aa)) folds into the Flavodoxin-like domain. 527–531 (TETGK) provides a ligand contact to FMN. The interval 603 to 622 (RGDGTSDLGSGTFKTPTPKS) is disordered. 669–700 (VFGLGSSAYPKFCHFGKTVDKILGDLGGERIL) contributes to the FMN binding site. The FAD-binding FR-type domain occupies 776–1021 (KQLITCKVKE…IRRAPSFHMP (246 aa)). FAD contacts are provided by residues 811–822 (YDPGDHVGVLAC) and 954–964 (LQPRFYSISSS). NADP(+) contacts are provided by residues 1028–1147 (LILV…QQKL) and 1128–1143 (NGHFYVCGDCKMAEEV).

The protein belongs to the NOS family. The cofactor is heme b. FAD is required as a cofactor. FMN serves as cofactor. As to expression, constitutively expressed at a low level in the larval fat body, hemocyte, Malpighian tubule, midgut, silk gland and adult antenna.

It catalyses the reaction 2 L-arginine + 3 NADPH + 4 O2 + H(+) = 2 L-citrulline + 2 nitric oxide + 3 NADP(+) + 4 H2O. Its activity is regulated as follows. Expression is dependent on and stimulated by NADPH, calcium, BH4 and calmodulin. The activity is not dependent on FAD and is not stimulated by its presence. Functionally, produces nitric oxide (NO) which is a messenger molecule with diverse functions throughout the body. Involved in the induction of immune gene expression. The protein is Nitric oxide synthase of Bombyx mori (Silk moth).